We begin with the raw amino-acid sequence, 113 residues long: Putative pterin-4-alpha-carbinolamine dehydratase (113 aa).

It belongs to the pterin-4-alpha-carbinolamine dehydratase family.

It catalyses the reaction (4aS,6R)-4a-hydroxy-L-erythro-5,6,7,8-tetrahydrobiopterin = (6R)-L-erythro-6,7-dihydrobiopterin + H2O. The sequence is that of Putative pterin-4-alpha-carbinolamine dehydratase from Pelodictyon phaeoclathratiforme (strain DSM 5477 / BU-1).